Consider the following 759-residue polypeptide: Secretin XpsD (759 aa).

A signal peptide spans 1 to 21; the sequence is MSERMTPRLFPVSLLIGLLAG. A lipid anchor (N-palmitoyl cysteine) is attached at C22. Residue C22 is the site of S-diacylglycerol cysteine attachment. The segment covering 40-51 has biased composition (low complexity); the sequence is VGAAGATQTTAE. The tract at residues 40–69 is disordered; it reads VGAAGATQTTAEQRADGNASAKPTPVIRRG. The N0 stretch occupies residues 92-187; the sequence is GSATFNFEGE…APSTASPSAA (96 aa). Residues 189 to 253 are N1; that stretch reads GFEVRVVPLK…VQIFDVDWLS (65 aa). The N2 stretch occupies residues 254–323; it reads GMSVGVFPIQ…IQQWLDRIDS (70 aa). An N3 region spans residues 326–474; sequence GGVRLFSYEL…SIRDVIEKLD (149 aa). The interval 352-434 is disordered; that stretch reads GGRGNGGNSG…PPSTNQNGSV (83 aa). The segment covering 392 to 401 has biased composition (gly residues); sequence ATGGDIGGTS. Polar residues predominate over residues 425-434; the sequence is PPSTNQNGSV. A secretin region spans residues 479-734; that stretch reads QVHIEAQIAE…VLITPSIVRN (256 aa). Positions 736–759 are s domain; sequence QDARDLTDEYGSKFKSMRPMDVHK.

The protein belongs to the bacterial secretin family. GSP D subfamily. As to quaternary structure, forms a cylindrical channel with 15 subunits. Binds to XpsN.

The protein resides in the cell outer membrane. Its function is as follows. Involved in a type II secretion system (T2SS, formerly general secretion pathway, GSP) for the export of proteins. This subunit forms the outer membrane channel. The protein is Secretin XpsD (xpsD) of Xanthomonas campestris pv. campestris (strain ATCC 33913 / DSM 3586 / NCPPB 528 / LMG 568 / P 25).